Reading from the N-terminus, the 416-residue chain is Bifunctional protein GlmU (416 aa).

The interval 1-229 is pyrophosphorylase; sequence MTNYAIILAA…FNESLGVNDR (229 aa). UDP-N-acetyl-alpha-D-glucosamine-binding positions include 8 to 11, Lys-22, Gln-72, and 77 to 78; these read LAAG and GT. A Mg(2+)-binding site is contributed by Asp-102. The UDP-N-acetyl-alpha-D-glucosamine site is built by Gly-139, Glu-154, Asn-169, and Asn-227. Residue Asn-227 coordinates Mg(2+). The tract at residues 230 to 250 is linker; sequence VALATAETVMRQRITQKHMVN. The segment at 251 to 416 is N-acetyltransferase; the sequence is GVTFQNPETV…DSHCTFGSWR (166 aa). UDP-N-acetyl-alpha-D-glucosamine contacts are provided by Arg-332 and Lys-350. The Proton acceptor role is filled by His-362. Residues Tyr-365 and Asn-376 each coordinate UDP-N-acetyl-alpha-D-glucosamine. Acetyl-CoA-binding positions include Ala-379 and 385-386; that span reads NY.

In the N-terminal section; belongs to the N-acetylglucosamine-1-phosphate uridyltransferase family. It in the C-terminal section; belongs to the transferase hexapeptide repeat family. In terms of assembly, homotrimer. Mg(2+) is required as a cofactor.

The protein localises to the cytoplasm. The enzyme catalyses alpha-D-glucosamine 1-phosphate + acetyl-CoA = N-acetyl-alpha-D-glucosamine 1-phosphate + CoA + H(+). The catalysed reaction is N-acetyl-alpha-D-glucosamine 1-phosphate + UTP + H(+) = UDP-N-acetyl-alpha-D-glucosamine + diphosphate. The protein operates within nucleotide-sugar biosynthesis; UDP-N-acetyl-alpha-D-glucosamine biosynthesis; N-acetyl-alpha-D-glucosamine 1-phosphate from alpha-D-glucosamine 6-phosphate (route II): step 2/2. Its pathway is nucleotide-sugar biosynthesis; UDP-N-acetyl-alpha-D-glucosamine biosynthesis; UDP-N-acetyl-alpha-D-glucosamine from N-acetyl-alpha-D-glucosamine 1-phosphate: step 1/1. It participates in bacterial outer membrane biogenesis; LPS lipid A biosynthesis. Functionally, catalyzes the last two sequential reactions in the de novo biosynthetic pathway for UDP-N-acetylglucosamine (UDP-GlcNAc). The C-terminal domain catalyzes the transfer of acetyl group from acetyl coenzyme A to glucosamine-1-phosphate (GlcN-1-P) to produce N-acetylglucosamine-1-phosphate (GlcNAc-1-P), which is converted into UDP-GlcNAc by the transfer of uridine 5-monophosphate (from uridine 5-triphosphate), a reaction catalyzed by the N-terminal domain. This chain is Bifunctional protein GlmU, found in Streptococcus pyogenes serotype M12 (strain MGAS2096).